Here is a 557-residue protein sequence, read N- to C-terminus: Mercuric reductase (557 aa).

An HMA domain is found at 1–65; it reads MILLSIEGMT…AIEALGYIAK (65 aa). The a metal cation site is built by cysteine 11 and cysteine 14. Residues alanine 106 and alanine 126 each contribute to the FAD site. A disulfide bridge connects residues cysteine 133 and cysteine 138. Residues lysine 142, alanine 207, aspartate 399, and valine 407 each coordinate FAD. Cysteine 554 and cysteine 555 together coordinate Hg(2+).

The protein belongs to the class-I pyridine nucleotide-disulfide oxidoreductase family. As to quaternary structure, homodimer. FAD is required as a cofactor.

It carries out the reaction Hg + NADP(+) + H(+) = Hg(2+) + NADPH. Resistance to Hg(2+) in bacteria appears to be governed by a specialized system which includes mercuric reductase. MerA protein is responsible for volatilizing mercury as Hg(0). This Shewanella putrefaciens (Pseudomonas putrefaciens) protein is Mercuric reductase (merA).